Consider the following 374-residue polypeptide: Wnt inhibitory factor 1 (374 aa).

The N-terminal stretch at Met-1–Glu-28 is a signal peptide. The 140-residue stretch at Met-33–Cys-172 folds into the WIF domain. Residue Asn-83 is glycosylated (N-linked (GlcNAc...) asparagine). 7 cysteine pairs are disulfide-bonded: Cys-135–Cys-172, Cys-177–Cys-187, Cys-181–Cys-193, Cys-195–Cys-204, Cys-209–Cys-219, Cys-213–Cys-225, and Cys-227–Cys-236. EGF-like domains are found at residues Gln-173–Glu-205, Leu-208–Asp-237, Asp-237–Glu-269, Thr-270–Ser-301, and Lys-302–Asn-333. Asn-240 carries N-linked (GlcNAc...) asparagine glycosylation. 9 disulfides stabilise this stretch: Cys-241–Cys-251, Cys-245–Cys-257, Cys-259–Cys-268, Cys-273–Cys-283, Cys-277–Cys-289, Cys-291–Cys-300, Cys-305–Cys-315, Cys-309–Cys-321, and Cys-323–Cys-332. Positions Ala-343–Trp-374 are disordered. Residues Gly-348–Pro-358 are compositionally biased toward polar residues.

As to expression, during somatogenesis, expressed predominantly in unsegmented paraxial presomitic mesoderm and, to a much lesser extent, in newly segmented somites.

Its subcellular location is the secreted. Binds to WNT proteins and inhibits their activities. May be involved in mesoderm segmentation. This chain is Wnt inhibitory factor 1 (wif1), found in Xenopus laevis (African clawed frog).